The primary structure comprises 534 residues: CAP-Gly domain-containing linker protein 3 (534 aa).

Positions M1 to L16 are enriched in basic and acidic residues. Residues M1–V33 form a disordered region. ANK repeat units follow at residues T107–R148, T150–A173, and N187–T299. Residues G304 to P346 enclose the CAP-Gly 1 domain. The interval K349–L391 is disordered. Low complexity predominate over residues P358–T367. Over residues G377–S390 the composition is skewed to basic residues. In terms of domain architecture, CAP-Gly 2 spans G423 to P465. Residues P475–S534 are goLD.

In terms of assembly, homodimer.

It is found in the cytoplasm. Its subcellular location is the golgi apparatus. The protein localises to the golgi stack. In terms of biological role, functions as a cytoplasmic linker protein. Involved in TGN-endosome dynamics. The sequence is that of CAP-Gly domain-containing linker protein 3 (clip3) from Xenopus laevis (African clawed frog).